Here is a 330-residue protein sequence, read N- to C-terminus: MSLSATQLKALEDSVLNTSGKVLLHDRVRALFTLKSLKNEDAIRIISKGFQDSAALLKHELAYCLGQIRNPLALPVLESVLRNPSEDPMVRHEAAEAMGAISTADSIPILKQYLSDPDRSVRETCEIAIAKIEWDKTEEGAKNDKATRDENRLPLYTSIDPAPATSGLLTGAPRPEEISQTKIDELRDNLLDVNRPLFERYRAMFALRNIGSPAAVDALAAGFSGDSALFKHEIAFVFGQLLSPHSVPCLIEVLQNSPESDMVRHEAAEALGGIATPEVLPPLKEWVARDDAPVVVRESCQVALDLWEYENSGDFQYANGLESPSTPISV.

3 HEAT-like PBS-type repeats span residues 57-83, 90-116, and 199-225; these read LKHE…VLRN, VRHE…YLSD, and ERYR…GFSG. The Fe cation site is built by H59, E60, H92, and E93. Fe cation-binding residues include H232, E233, H265, and E266. The stretch at 263 to 289 is one HEAT-like PBS-type 4 repeat; sequence VRHEAAEALGGIATPEVLPPLKEWVAR.

This sequence belongs to the deoxyhypusine hydroxylase family. It depends on Fe(2+) as a cofactor.

It is found in the cytoplasm. It localises to the nucleus. It catalyses the reaction [eIF5A protein]-deoxyhypusine + AH2 + O2 = [eIF5A protein]-hypusine + A + H2O. The protein operates within protein modification; eIF5A hypusination. Catalyzes the hydroxylation of the N(6)-(4-aminobutyl)-L-lysine intermediate to form hypusine, an essential post-translational modification only found in mature eIF-5A factor. In Lentinula edodes (Shiitake mushroom), this protein is Deoxyhypusine hydroxylase.